The following is a 351-amino-acid chain: Geranylgeranyl pyrophosphate synthase (351 aa).

Isopentenyl diphosphate-binding residues include K55, R58, and Q93. Residues D100 and D104 each coordinate Mg(2+). R109 is a binding site for dimethylallyl diphosphate. R110 contacts isopentenyl diphosphate. Residues K196, T197, Q236, K253, and K262 each contribute to the dimethylallyl diphosphate site.

The protein belongs to the FPP/GGPP synthase family. Interacts with fps1. Mg(2+) serves as cofactor.

Its subcellular location is the cytoplasm. The protein localises to the nucleus. It carries out the reaction isopentenyl diphosphate + dimethylallyl diphosphate = (2E)-geranyl diphosphate + diphosphate. The catalysed reaction is isopentenyl diphosphate + (2E)-geranyl diphosphate = (2E,6E)-farnesyl diphosphate + diphosphate. It catalyses the reaction isopentenyl diphosphate + (2E,6E)-farnesyl diphosphate = (2E,6E,10E)-geranylgeranyl diphosphate + diphosphate. It participates in isoprenoid biosynthesis; farnesyl diphosphate biosynthesis; farnesyl diphosphate from geranyl diphosphate and isopentenyl diphosphate: step 1/1. It functions in the pathway isoprenoid biosynthesis; geranyl diphosphate biosynthesis; geranyl diphosphate from dimethylallyl diphosphate and isopentenyl diphosphate: step 1/1. The protein operates within isoprenoid biosynthesis; geranylgeranyl diphosphate biosynthesis; geranylgeranyl diphosphate from farnesyl diphosphate and isopentenyl diphosphate: step 1/1. Its function is as follows. Catalyzes the trans-addition of the 3 molecules of IPP onto DMAPP to form geranylgeranyl pyrophosphate. Required for the membrane attachment of ypt7 and rhb1. May be involved in vesicle trafficking and protein sorting. Required for forespore membrane formation. The polypeptide is Geranylgeranyl pyrophosphate synthase (spo9) (Schizosaccharomyces pombe (strain 972 / ATCC 24843) (Fission yeast)).